The sequence spans 476 residues: Sulfite exporter TauE/SafE family protein 3 (476 aa).

12 consecutive transmembrane segments (helical) span residues 8-28 (WLGL…FAFV), 76-92 (FNWQ…FGAA), 99-115 (VGGG…IIGF), 120-142 (ATAI…NLRL), 151-171 (IIDY…ISIG), 172-192 (VAFN…VLFL), 257-277 (VYWK…ALQI), 291-311 (VINL…AVAL), 339-359 (FGII…FIMG), 360-380 (PLFL…TFAM), 397-417 (FPVP…WVGQ), and 433-453 (IIFI…GVGI).

This sequence belongs to the 4-toluene sulfonate uptake permease (TSUP) (TC 2.A.102) family.

Its subcellular location is the membrane. In Arabidopsis thaliana (Mouse-ear cress), this protein is Sulfite exporter TauE/SafE family protein 3.